The following is a 292-amino-acid chain: MAKSCTLVLLLVALVGLSLLVSPIACSRKLSKPKPKPKPSMKKPVVRAHNNYTGSPSVTVTTGWAAAGATYYGAPNGDGSDGGACGYQTAVGQRPFSSMIAAGSPSLYKGGKGCGACYEVKCTTNAACSGQPATVVITDECPGGICLAGAAHFDMSGTSMGAMAKPGMADKLRAAGILQVQYRRVPCKYSGVNIAFRVDQGANPFYFEVLIEFEDGDGDLNAVDLMEAGCGWTPMVQNWGALWRYNSNTGKALKAPFSLRLTSDSGKVLVANNVIPASWKPGVTYRSLVNYS.

Positions 1 to 27 are cleaved as a signal peptide; that stretch reads MAKSCTLVLLLVALVGLSLLVSPIACS. Residue Asn51 is glycosylated (N-linked (GlcNAc...) asparagine). The 111-residue stretch at 82 to 192 folds into the Expansin-like EG45 domain; sequence GGACGYQTAV…RRVPCKYSGV (111 aa). Intrachain disulfides connect Cys85–Cys114, Cys117–Cys187, and Cys122–Cys128. One can recognise an Expansin-like CBD domain in the interval 205–287; that stretch reads FYFEVLIEFE…SWKPGVTYRS (83 aa).

Belongs to the expansin family. Expansin B subfamily. In terms of tissue distribution, expressed in internodes.

It localises to the secreted. Its subcellular location is the cell wall. The protein localises to the membrane. In terms of biological role, may cause loosening and extension of plant cell walls by disrupting non-covalent bonding between cellulose microfibrils and matrix glucans. No enzymatic activity has been found. May be required for rapid internodal elongation in deepwater rice during submergence. The polypeptide is Expansin-B11 (EXPB11) (Oryza sativa subsp. japonica (Rice)).